A 316-amino-acid polypeptide reads, in one-letter code: Ribosomal RNA small subunit methyltransferase H (316 aa).

Residues 39-41, aspartate 56, phenylalanine 82, aspartate 103, and glutamine 110 contribute to the S-adenosyl-L-methionine site; that span reads GGH.

This sequence belongs to the methyltransferase superfamily. RsmH family.

It localises to the cytoplasm. It catalyses the reaction cytidine(1402) in 16S rRNA + S-adenosyl-L-methionine = N(4)-methylcytidine(1402) in 16S rRNA + S-adenosyl-L-homocysteine + H(+). Specifically methylates the N4 position of cytidine in position 1402 (C1402) of 16S rRNA. In Methylacidiphilum infernorum (isolate V4) (Methylokorus infernorum (strain V4)), this protein is Ribosomal RNA small subunit methyltransferase H.